A 205-amino-acid chain; its full sequence is Dr1-associated corepressor (205 aa).

The Histone-fold domain occupies Pro-14–Glu-77. Residues Pro-91–Ser-205 are disordered. Residues Glu-98–Pro-108 are compositionally biased toward basic and acidic residues. The span at Ser-138–Thr-155 shows a compositional bias: acidic residues. The segment covering Pro-172–Ser-193 has biased composition (pro residues). Residues Glu-196–Ser-205 show a composition bias toward acidic residues.

Belongs to the NC2 alpha/DRAP1 family. As to quaternary structure, heterodimer with DR1. Binds BTAF1. Phosphorylation reduces DNA binding, but has no effect on heterodimerization and TBP binding.

Its subcellular location is the nucleus. Functionally, the association of the DR1/DRAP1 heterodimer with TBP results in a functional repression of both activated and basal transcription of class II genes. This interaction precludes the formation of a transcription-competent complex by inhibiting the association of TFIIA and/or TFIIB with TBP. Can bind to DNA on its own. The chain is Dr1-associated corepressor from Rattus norvegicus (Rat).